We begin with the raw amino-acid sequence, 88 residues long: Probable Fe(2+)-trafficking protein (88 aa).

Belongs to the Fe(2+)-trafficking protein family.

Functionally, could be a mediator in iron transactions between iron acquisition and iron-requiring processes, such as synthesis and/or repair of Fe-S clusters in biosynthetic enzymes. The protein is Probable Fe(2+)-trafficking protein of Neisseria gonorrhoeae (strain ATCC 700825 / FA 1090).